A 156-amino-acid chain; its full sequence is Phosphopantetheine adenylyltransferase (156 aa).

Ser9 contributes to the substrate binding site. Residues 9–10 (SF) and His17 each bind ATP. Substrate is bound by residues Lys41, Ile74, and Lys88. Residues 89-91 (GLR), Glu99, and 123-129 (LLHVSSS) each bind ATP.

Belongs to the bacterial CoaD family. As to quaternary structure, homohexamer. It depends on Mg(2+) as a cofactor.

It is found in the cytoplasm. The catalysed reaction is (R)-4'-phosphopantetheine + ATP + H(+) = 3'-dephospho-CoA + diphosphate. Its pathway is cofactor biosynthesis; coenzyme A biosynthesis; CoA from (R)-pantothenate: step 4/5. Its function is as follows. Reversibly transfers an adenylyl group from ATP to 4'-phosphopantetheine, yielding dephospho-CoA (dPCoA) and pyrophosphate. The chain is Phosphopantetheine adenylyltransferase from Kocuria rhizophila (strain ATCC 9341 / DSM 348 / NBRC 103217 / DC2201).